The following is a 571-amino-acid chain: Proline--tRNA ligase (571 aa).

This sequence belongs to the class-II aminoacyl-tRNA synthetase family. ProS type 1 subfamily. Homodimer.

It localises to the cytoplasm. It catalyses the reaction tRNA(Pro) + L-proline + ATP = L-prolyl-tRNA(Pro) + AMP + diphosphate. Catalyzes the attachment of proline to tRNA(Pro) in a two-step reaction: proline is first activated by ATP to form Pro-AMP and then transferred to the acceptor end of tRNA(Pro). As ProRS can inadvertently accommodate and process non-cognate amino acids such as alanine and cysteine, to avoid such errors it has two additional distinct editing activities against alanine. One activity is designated as 'pretransfer' editing and involves the tRNA(Pro)-independent hydrolysis of activated Ala-AMP. The other activity is designated 'posttransfer' editing and involves deacylation of mischarged Ala-tRNA(Pro). The misacylated Cys-tRNA(Pro) is not edited by ProRS. This Pseudoalteromonas atlantica (strain T6c / ATCC BAA-1087) protein is Proline--tRNA ligase.